The primary structure comprises 259 residues: Ribonuclease HII (259 aa).

One can recognise an RNase H type-2 domain in the interval 70–258 (TLIAGIDEVG…VKSLVLGKKE (189 aa)). 3 residues coordinate a divalent metal cation: aspartate 76, glutamate 77, and aspartate 168.

It belongs to the RNase HII family. The cofactor is Mn(2+). Mg(2+) is required as a cofactor.

Its subcellular location is the cytoplasm. It carries out the reaction Endonucleolytic cleavage to 5'-phosphomonoester.. Functionally, endonuclease that specifically degrades the RNA of RNA-DNA hybrids. The polypeptide is Ribonuclease HII (Streptococcus pneumoniae (strain 70585)).